The chain runs to 1270 residues: Myosin-3 (1270 aa).

A disordered region spans residues 1–20; sequence MAVIKKGARRKDVKEPKKRS. A Myosin motor domain is found at 36–715; it reads VGVSDLTLLS…SLFALEDMRD (680 aa). Residue 129 to 136 participates in ATP binding; sequence GESGAGKT. Ser357 bears the Phosphoserine mark. The segment at 404 to 486 is actin-binding; sequence SIGILDIYGF…PGILAAMNDS (83 aa). IQ domains are found at residues 719–739 and 740–765; these read YNMAARIQRAWRRFLQRRIDA and AIKIQRTIREKKGGNKYVKLRDYGTK. A TH1 domain is found at 771–961; it reads KERRSMSLLG…TIYVRRGHPA (191 aa). Disordered stretches follow at residues 951–1015, 1029–1136, and 1215–1270; these read STIY…QKPV, YNPK…GSSS, and VQFG…DDDW. A compositionally biased stretch (basic residues) spans 980–1000; sequence IKSKKSKHKSTHKHTHSHRSH. Positions 1066 to 1078 are enriched in low complexity; the sequence is KKASSSHKSSSAK. The span at 1089–1098 shows a compositional bias: basic and acidic residues; the sequence is GVEKNKEPLK. The segment covering 1107–1116 has biased composition (pro residues); it reads PIPPPPPPMG. The SH3 domain maps to 1118-1180; that stretch reads PKDPKFEAAY…PTAYMTPYKD (63 aa). Residues 1215 to 1234 show a composition bias toward polar residues; that stretch reads VQFGSATVGPTSDNQSNPVG. Positions 1256–1270 are enriched in acidic residues; sequence ADDDDNDDGDDDDDW.

This sequence belongs to the TRAFAC class myosin-kinesin ATPase superfamily. Myosin family. In terms of assembly, interacts (via myosin motor domain) with SHE4; this interaction is important for proper localization and may regulate the interaction of the motor domain with actin. Interacts (via SH3 domain) with VRP1; this interaction is required for localization to sites of polarized growth and may regulate the interaction of the tail domain with actin. Interacts (via SH3 domain) with PAN1; this interaction is important for late stages of endocytopsis. Interacts (via SH3 domain) with BBC1 and LAS17. Interacts (via C-terminal acidic tail) with ARC19 and ARC40; ARC19 and ARC40 are Arp2/3 complex subunits. In terms of processing, phosphorylation of the TEDS site (Ser-357) is required for the polarization of the actin cytoskeleton and for ligand-induced, but not for constitutive internalization of STE2. Phosphorylation probably activates the myosin-I ATPase. Ser-357 is phosphorylated by CLA4 and STE20 in vitro.

It localises to the cytoplasm. The protein localises to the cytoskeleton. It is found in the actin patch. One of two redundant type-I myosins implicated in the organization of the actin cytoskeleton. Required for proper actin cytoskeleton polarization and for the internalization step in endocytosis. At the cell cortex, assembles in patch-like structures together with proteins from the actin-polymerizing machinery and promotes actin assembly. Functions redundantly with LAS17 as actin nucleation-promoting factor (NPF) for the Arp2/3 complex. Motor domain phosphorylation by PAK kinases CLA4 and STE20 promotes CDC42-regulated actin assembly. Functions together with the NPF PAN1 in late stages of endocytosis. Motor domain phosphorylation by PDK1 kinases PKH1 and PKH2, and by SGK kinases YPK1 and YPK2, promotes ligand-induced, but not constitutive endocytosis of the G protein-coupled receptor STE2. The protein is Myosin-3 (MYO3) of Saccharomyces cerevisiae (strain YJM789) (Baker's yeast).